The chain runs to 226 residues: Cytidylate kinase (226 aa).

An ATP-binding site is contributed by 10 to 18 (GFSSTGKST).

The protein belongs to the cytidylate kinase family. Type 1 subfamily.

The protein resides in the cytoplasm. The catalysed reaction is CMP + ATP = CDP + ADP. The enzyme catalyses dCMP + ATP = dCDP + ADP. In Flavobacterium psychrophilum (strain ATCC 49511 / DSM 21280 / CIP 103535 / JIP02/86), this protein is Cytidylate kinase.